Here is a 389-residue protein sequence, read N- to C-terminus: Phospho-N-acetylmuramoyl-pentapeptide-transferase (389 aa).

10 helical membrane passes run 21–41, 70–90, 97–117, 134–154, 189–209, 222–242, 259–279, 286–306, 311–331, and 366–386; these read FITF…LVTG, GTPT…TLLW, FIWV…VDDY, YMWQ…SVSA, TISY…VIVG, GLAI…AYLT, AGEL…FLWF, VFMG…IAVI, VVLF…MLQV, and QVVV…LSTL.

It belongs to the glycosyltransferase 4 family. MraY subfamily. It depends on Mg(2+) as a cofactor.

It is found in the cell inner membrane. The enzyme catalyses UDP-N-acetyl-alpha-D-muramoyl-L-alanyl-gamma-D-glutamyl-meso-2,6-diaminopimeloyl-D-alanyl-D-alanine + di-trans,octa-cis-undecaprenyl phosphate = di-trans,octa-cis-undecaprenyl diphospho-N-acetyl-alpha-D-muramoyl-L-alanyl-D-glutamyl-meso-2,6-diaminopimeloyl-D-alanyl-D-alanine + UMP. The protein operates within cell wall biogenesis; peptidoglycan biosynthesis. Its function is as follows. Catalyzes the initial step of the lipid cycle reactions in the biosynthesis of the cell wall peptidoglycan: transfers peptidoglycan precursor phospho-MurNAc-pentapeptide from UDP-MurNAc-pentapeptide onto the lipid carrier undecaprenyl phosphate, yielding undecaprenyl-pyrophosphoryl-MurNAc-pentapeptide, known as lipid I. This Janthinobacterium sp. (strain Marseille) (Minibacterium massiliensis) protein is Phospho-N-acetylmuramoyl-pentapeptide-transferase.